Reading from the N-terminus, the 339-residue chain is Heat-inducible transcription repressor HrcA (339 aa).

The protein belongs to the HrcA family.

Functionally, negative regulator of class I heat shock genes (grpE-dnaK-dnaJ and groELS operons). Prevents heat-shock induction of these operons. This chain is Heat-inducible transcription repressor HrcA, found in Paraburkholderia xenovorans (strain LB400).